Consider the following 428-residue polypeptide: Putative gustatory receptor 2a (428 aa).

Topologically, residues 1-40 are cytoplasmic; that stretch reads MDTLRALEPLHRACQVCNLWPWRLAPPPDSEGILLRRSRW. The chain crosses the membrane as a helical span at residues 41-61; it reads LELYGWTVLIAATSFTVYGLF. Over 62–145 the chain is Extracellular; the sequence is QESSVEEKQD…INMRRQTSRR (84 aa). A helical membrane pass occupies residues 146–166; that stretch reads AVWILWGYAVSQLLILGAKLL. The Cytoplasmic segment spans residues 167-173; the sequence is SRGDRFP. The helical transmembrane segment at 174–194 threads the bilayer; that stretch reads IYWISYLLPLLVCGLRYFQIF. N-linked (GlcNAc...) asparagine glycosylation is present at asparagine 195. Residues 195-250 lie on the Extracellular side of the membrane; it reads NATQLVRQRLDVLLVALQQLQLHQKGPAVDTVLEEQEDLEEAAMDRLIAVRLVYQR. The helical transmembrane segment at 251 to 271 threads the bilayer; the sequence is VWALVALLNRCYGLSMLMQVG. The Cytoplasmic segment spans residues 272–300; sequence NDFLAITSNCYWMFLNFRQSAASPFDILQ. The helical transmembrane segment at 301–321 threads the bilayer; sequence IVASGVWSAPHLGNVLVLSLL. Residues 322–349 are Extracellular-facing; the sequence is CDRTAQCASRLALCLHQVSVDLRNESHN. A glycan (N-linked (GlcNAc...) asparagine) is linked at asparagine 345. Residues 350–370 traverse the membrane as a helical segment; that stretch reads ALVGTLVRYCAPLIILVPLQI. Topologically, residues 371-395 are cytoplasmic; it reads TQFSLQLLHQRLHFSAAGFFNVDCT. A helical membrane pass occupies residues 396 to 416; the sequence is LLYTIVGATTTYLIILIQFHM. Over 417 to 428 the chain is Extracellular; that stretch reads SESTIGSDSNGQ.

Belongs to the insect chemoreceptor superfamily. Gustatory receptor (GR) family. Gr2a subfamily. Expressed in neurons of the terminal external chemosensory organ, the dorsal external chemosensory organ, as well as in the dorsal pharyngeal sense organ of larvae.

It is found in the cell membrane. In terms of biological role, probable gustatory receptor which mediates acceptance or avoidance behavior, depending on its not yet determined substrates. This Drosophila melanogaster (Fruit fly) protein is Putative gustatory receptor 2a (Gr2a).